A 242-amino-acid chain; its full sequence is MSQADLLAQDPVFQLKGSMLAITVMELAHNDLDRLDAQLTEKVAQAPAFFSNTPLVLALDKLPEGEGELNLAELMAVCRRHGLRTLAIRASREGDIAAAEAMDLPVLPPSGARERLLDPAPKKVEEKPAEPEHKPSRIVTSPVRGGQQVYAQGGDLIVLAPVSAGAELLADGNIHVYAPMRGRALAGIKGNTKARIFCQQMGAEMLSIAGHYKVAEDLRRDPLWGDAVHVSLSGDVLNITRL.

Residues 120 to 135 (APKKVEEKPAEPEHKP) show a composition bias toward basic and acidic residues. Residues 120–144 (APKKVEEKPAEPEHKPSRIVTSPVR) are disordered.

It belongs to the MinC family. Interacts with MinD and FtsZ.

Functionally, cell division inhibitor that blocks the formation of polar Z ring septums. Rapidly oscillates between the poles of the cell to destabilize FtsZ filaments that have formed before they mature into polar Z rings. Prevents FtsZ polymerization. The sequence is that of Probable septum site-determining protein MinC from Ectopseudomonas mendocina (strain ymp) (Pseudomonas mendocina).